The sequence spans 178 residues: Major urinary protein 4 (178 aa).

Residues 1–16 (MKLLLCLGLTLVCIHA) form the signal peptide. Cysteines 80 and 173 form a disulfide.

The protein belongs to the calycin superfamily. Lipocalin family. In terms of tissue distribution, expressed in lacrimal gland, parotid gland, sublingual gland, nasal mucus, and vomeronasal organ.

It is found in the secreted. Its function is as follows. Binds pheromones, likely to displace pheromones complexed to urinary MUPs and transport them to the vomeronasal organ (VNO) where they associate with their neuronal receptor(s). MUP4 is highly specific for the male mouse pheromone 2-sec-butyl-4,5-dihydrothiazole (SBT). The chain is Major urinary protein 4 (Mup4) from Mus musculus (Mouse).